A 452-amino-acid polypeptide reads, in one-letter code: Biotin carboxylase (452 aa).

The region spanning 1–445 is the Biotin carboxylation domain; the sequence is MFKKVLIANR…TTAFVTNHLK (445 aa). ATP-binding positions include lysine 116, lysine 158, 164 to 165, 200 to 203, histidine 208, and histidine 235; these read GG and EKAV. Residues 120–317 form the ATP-grasp domain; that stretch reads RTAMQTAGVP…LVEWQLLIAA (198 aa). Lysine 237 contributes to the hydrogencarbonate binding site. Residues glutamate 275 and glutamate 288 each contribute to the ATP site. 3 residues coordinate Mg(2+): glutamate 275, glutamate 288, and asparagine 290. Mn(2+)-binding residues include glutamate 275, glutamate 288, and asparagine 290. Arginine 292, valine 295, and arginine 338 together coordinate hydrogencarbonate. The active site involves arginine 292. Arginine 338 contacts biotin.

In terms of assembly, acetyl-CoA carboxylase is a heterohexamer of biotin carboxyl carrier protein, biotin carboxylase and the two subunits of carboxyl transferase in a 2:2 complex. It depends on Mg(2+) as a cofactor. The cofactor is Mn(2+).

The enzyme catalyses N(6)-biotinyl-L-lysyl-[protein] + hydrogencarbonate + ATP = N(6)-carboxybiotinyl-L-lysyl-[protein] + ADP + phosphate + H(+). It participates in lipid metabolism; malonyl-CoA biosynthesis; malonyl-CoA from acetyl-CoA: step 1/1. Functionally, this protein is a component of the acetyl coenzyme A carboxylase complex; first, biotin carboxylase catalyzes the carboxylation of the carrier protein and then the transcarboxylase transfers the carboxyl group to form malonyl-CoA. This is Biotin carboxylase (accC) from Halalkalibacterium halodurans (strain ATCC BAA-125 / DSM 18197 / FERM 7344 / JCM 9153 / C-125) (Bacillus halodurans).